Here is a 284-residue protein sequence, read N- to C-terminus: Efem/EfeO family lipoprotein (284 aa).

The signal sequence occupies residues 1 to 17; that stretch reads MKKLTTLLLASTLLIAA. A lipid anchor (N-palmitoyl cysteine) is attached at C18. C18 is lipidated: S-diacylglycerol cysteine.

This sequence belongs to the EfeM/EfeO family.

It localises to the cell membrane. This is Efem/EfeO family lipoprotein from Staphylococcus aureus (strain NCTC 8325 / PS 47).